The following is a 638-amino-acid chain: Phosphomethylpyrimidine synthase (638 aa).

Substrate-binding positions include Asn243, Met272, Tyr301, His337, 357-359 (SRG), 398-401 (DGLR), and Glu437. His441 lines the Zn(2+) pocket. Tyr464 is a substrate binding site. His505 contacts Zn(2+). [4Fe-4S] cluster is bound by residues Cys585, Cys588, and Cys593.

This sequence belongs to the ThiC family. Homodimer. It depends on [4Fe-4S] cluster as a cofactor.

It catalyses the reaction 5-amino-1-(5-phospho-beta-D-ribosyl)imidazole + S-adenosyl-L-methionine = 4-amino-2-methyl-5-(phosphooxymethyl)pyrimidine + CO + 5'-deoxyadenosine + formate + L-methionine + 3 H(+). The protein operates within cofactor biosynthesis; thiamine diphosphate biosynthesis. Catalyzes the synthesis of the hydroxymethylpyrimidine phosphate (HMP-P) moiety of thiamine from aminoimidazole ribotide (AIR) in a radical S-adenosyl-L-methionine (SAM)-dependent reaction. This chain is Phosphomethylpyrimidine synthase, found in Dechloromonas aromatica (strain RCB).